Here is a 245-residue protein sequence, read N- to C-terminus: 8-amino-3,8-dideoxy-manno-octulosonate cytidylyltransferase (245 aa).

Belongs to the KdsB family.

The protein resides in the cytoplasm. It catalyses the reaction 8-amino-3,8-dideoxy-alpha-D-manno-octulosonate + CTP = CMP-8-amino-3,8-dideoxy-alpha-D-manno-oct-2-ulosonate + diphosphate. It functions in the pathway bacterial outer membrane biogenesis; lipopolysaccharide biosynthesis. In terms of biological role, activates KDO8N (a required 8-carbon sugar) for incorporation into bacterial lipopolysaccharide in the Shewanella genus. This is 8-amino-3,8-dideoxy-manno-octulosonate cytidylyltransferase from Shewanella baltica (strain OS223).